Here is a 251-residue protein sequence, read N- to C-terminus: Hydroxyacylglutathione hydrolase (251 aa).

Positions 53, 55, 57, 58, 109, 126, and 164 each coordinate Zn(2+).

The protein belongs to the metallo-beta-lactamase superfamily. Glyoxalase II family. As to quaternary structure, monomer. The cofactor is Zn(2+).

It carries out the reaction an S-(2-hydroxyacyl)glutathione + H2O = a 2-hydroxy carboxylate + glutathione + H(+). Its pathway is secondary metabolite metabolism; methylglyoxal degradation; (R)-lactate from methylglyoxal: step 2/2. In terms of biological role, thiolesterase that catalyzes the hydrolysis of S-D-lactoyl-glutathione to form glutathione and D-lactic acid. This chain is Hydroxyacylglutathione hydrolase, found in Wigglesworthia glossinidia brevipalpis.